The chain runs to 346 residues: Enkurin domain-containing protein 1 (346 aa).

A disordered region spans residues 1 to 35; it reads MCEGPSRISGPIPPDPTLCPDNYRRPTSAQGRLEG. Position 91 is a phosphoserine (serine 91). The segment at 91–171 is required for binding to microtubules; it reads SLKRKDPKDH…AHFLRAHSRC (81 aa). Positions 114 to 125 are enriched in basic and acidic residues; the sequence is RFREQERSREQG. 3 disordered regions span residues 114–137, 167–197, and 260–280; these read RFRE…WRSP, AHSR…EPGL, and AEAR…TRMP. The residue at position 136 (serine 136) is a Phosphoserine. The span at 174 to 190 shows a compositional bias: pro residues; the sequence is GLPPPHVSSPQPTPPGP. An Enkurin domain is found at 251–343; that stretch reads ERRDLWRREA…IFSRPKVFVK (93 aa).

In terms of assembly, interacts with alpha-tubulin. Interacts (via central region) with CCP110 (via N-terminal region); competes with CEP97 for binding to CCP110.

It localises to the cytoplasm. Its subcellular location is the cytoskeleton. The protein localises to the microtubule organizing center. It is found in the centrosome. The protein resides in the centriole. It localises to the cilium basal body. Its subcellular location is the cell projection. The protein localises to the cilium. It is found in the spindle. The protein resides in the spindle pole. It localises to the cilium axoneme. Its function is as follows. Microtubule-binding protein which regulates microtubule organization and stability. Promotes the stability of astral microtubules and facilitates the proper orientation of the mitotic spindle. This allows the oriented division of basal keratinocytes and contributes to epidermal stratification. Required for the assembly of both primary and motile cilia. Destabilizes the interaction between CCP110 and CEP97 by competing with CEP97 for binding to CCP110 which promotes the removal of CCP110 and CEP97 from the mother centriole and allows the initiation of ciliogenesis. The protein is Enkurin domain-containing protein 1 (ENKD1) of Homo sapiens (Human).